The primary structure comprises 20 residues: Acidic phospholipase A2 CbIbeta (20 aa).

The protein belongs to the phospholipase A2 family. Group II subfamily. D49 sub-subfamily. Heterodimer of an acidic subunit (CbIalpha or CbIbeta) and a basic subunit (CbII). The acidic subunit (CbI) is non-toxic, and increases the toxicity of the basic subunit (CbII). Ca(2+) serves as cofactor. In terms of processing, contains 7 disulfide bonds. Expressed by the venom gland.

It is found in the secreted. It carries out the reaction a 1,2-diacyl-sn-glycero-3-phosphocholine + H2O = a 1-acyl-sn-glycero-3-phosphocholine + a fatty acid + H(+). Functionally, heterodimer: presynaptic neurotoxin. Its function is as follows. Monomer: Snake venom phospholipase A2 (PLA2) is inactive towards micellar phosphatidylcholine but is weakly active towards non-micellar dithiolecithin. PLA2 catalyzes the calcium-dependent hydrolysis of the 2-acyl groups in 3-sn-phosphoglycerides. This is Acidic phospholipase A2 CbIbeta from Pseudocerastes fieldi (Field's horned viper).